The following is a 762-amino-acid chain: N,N-dimethylformamidase beta subunit (762 aa).

In terms of assembly, heterotetramer of two DmfA1 (alpha) and two DmfA2 (beta) subunits.

The catalysed reaction is N,N-dimethylformamide + H2O = dimethylamine + formate. In terms of biological role, hydrolyzes N,N-dimethylformamide, and to a lesser extent N,N-dimethylacetamide and N,N-diethylacetamide. Has no activity against the substituted amides N-methylformamide, N-ethylformamide, N-ethylformamide and N-methylacetamide or the unsubstituted amides formamide, nicotinamide, acetoamide, benzamide, acetamide and acrylamide. The protein is N,N-dimethylformamidase beta subunit of Paracoccus aminophilus.